A 448-amino-acid polypeptide reads, in one-letter code: MTRIFGTDGVRGLANGQLTAELALDLSVAAARVLADRGEFKGHRPLAVVGRDTRISGQFLEHAVVAGLASAGVDVLRLRVLPTPAVAYLTEALGADLGVVISASHNPMPDNGIKFLARGGHKLDDAVEKLIEQHLAEEWDRPVGGDVGRVTPYATPVEEYVAHLVGTLTRSLDGIKVVLDCAHGAAYEAGPRALRAAGAEVVAIAVEPDGLNINADCGSTHLAALQAAVVEHGADVGFALDGDADRCLAVDHEGNAVDGDQILAILALGMAETGHLAKNTVVATVMSNLGFVQAMRAAGVGVRQTKVGDRYVLEAMRVSGYSLGGEQSGHVIMSEHATTGDGILTALHVLQRMAATGQSLQSLASVVTRLPQVLVNVPDVDKSRADDDAVLAAAIAEEEAALGDSGRVLLRPSGTEQLVRVMVEAATQEEAVSVAGRLADVVKRQLAL.

Serine 104 (phosphoserine intermediate) is an active-site residue. Mg(2+) is bound by residues serine 104, aspartate 241, aspartate 243, and aspartate 245. Serine 104 carries the post-translational modification Phosphoserine.

The protein belongs to the phosphohexose mutase family. The cofactor is Mg(2+). Activated by phosphorylation.

It carries out the reaction alpha-D-glucosamine 1-phosphate = D-glucosamine 6-phosphate. Its function is as follows. Catalyzes the conversion of glucosamine-6-phosphate to glucosamine-1-phosphate. The chain is Phosphoglucosamine mutase from Nocardioides sp. (strain ATCC BAA-499 / JS614).